Consider the following 85-residue polypeptide: ATP synthase subunit c (85 aa).

Helical transmembrane passes span 10 to 30 (IAVA…FGLL) and 53 to 73 (FIVA…ALFF).

Belongs to the ATPase C chain family. In terms of assembly, F-type ATPases have 2 components, F(1) - the catalytic core - and F(0) - the membrane proton channel. F(1) has five subunits: alpha(3), beta(3), gamma(1), delta(1), epsilon(1). F(0) has three main subunits: a(1), b(2) and c(10-14). The alpha and beta chains form an alternating ring which encloses part of the gamma chain. F(1) is attached to F(0) by a central stalk formed by the gamma and epsilon chains, while a peripheral stalk is formed by the delta and b chains.

It localises to the cell inner membrane. Functionally, f(1)F(0) ATP synthase produces ATP from ADP in the presence of a proton or sodium gradient. F-type ATPases consist of two structural domains, F(1) containing the extramembraneous catalytic core and F(0) containing the membrane proton channel, linked together by a central stalk and a peripheral stalk. During catalysis, ATP synthesis in the catalytic domain of F(1) is coupled via a rotary mechanism of the central stalk subunits to proton translocation. Key component of the F(0) channel; it plays a direct role in translocation across the membrane. A homomeric c-ring of between 10-14 subunits forms the central stalk rotor element with the F(1) delta and epsilon subunits. This chain is ATP synthase subunit c, found in Pseudomonas aeruginosa (strain LESB58).